The following is a 307-amino-acid chain: Protein YIF1A (307 aa).

A disordered region spans residues 1–42; sequence MNFQQQGYRATKPRARASPPTGGPMLFDDTSSGPPPMNNQNY. Topologically, residues 1–148 are cytoplasmic; that stretch reads MNFQQQGYRA…TPRHDVNAPD (148 aa). Residues 149-169 traverse the membrane as a helical segment; it reads LYIPTMAFITYILLAGMALGI. Residues 170 to 184 are Lumenal-facing; the sequence is QKRFSPEVLGLCAST. A helical membrane pass occupies residues 185–205; that stretch reads ALVWMIIEVLVMLLSLYLLTV. Over 206 to 213 the chain is Cytoplasmic; that stretch reads HTDLSTFD. A helical membrane pass occupies residues 214-236; the sequence is LVAYSGYKYVGMILTVFCGLLFG. Residues 237-239 are Lumenal-facing; that stretch reads SDG. The chain crosses the membrane as a helical span at residues 240-259; sequence YYVALAWSSCALMFFIVRSL. Residues 260 to 285 lie on the Cytoplasmic side of the membrane; the sequence is KMKILSSISADSMGAGASAKPRFRLY. The helical transmembrane segment at 286-306 threads the bilayer; it reads ITVASAAFQPFIIYWLTAHLV.

It belongs to the YIF1 family.

The protein resides in the endoplasmic reticulum membrane. Its subcellular location is the golgi apparatus membrane. It localises to the endoplasmic reticulum-Golgi intermediate compartment membrane. Possible role in transport between endoplasmic reticulum and Golgi. This is Protein YIF1A (yif1a) from Danio rerio (Zebrafish).